A 110-amino-acid polypeptide reads, in one-letter code: Hydrogenase maturation factor HypA (110 aa).

Residue histidine 2 participates in Ni(2+) binding. Cysteine 73, cysteine 76, cysteine 87, and cysteine 89 together coordinate Zn(2+).

It belongs to the HypA/HybF family.

Functionally, involved in the maturation of [NiFe] hydrogenases. Required for nickel insertion into the metal center of the hydrogenase. This is Hydrogenase maturation factor HypA from Archaeoglobus fulgidus (strain ATCC 49558 / DSM 4304 / JCM 9628 / NBRC 100126 / VC-16).